A 202-amino-acid chain; its full sequence is LexA repressor (202 aa).

Positions 28 to 48 (RAEIAQRLGFRSPNAAEEHLK) form a DNA-binding region, H-T-H motif. Active-site for autocatalytic cleavage activity residues include Ser-119 and Lys-156.

This sequence belongs to the peptidase S24 family. Homodimer.

It carries out the reaction Hydrolysis of Ala-|-Gly bond in repressor LexA.. Its function is as follows. Represses a number of genes involved in the response to DNA damage (SOS response), including recA and lexA. Binds to the 16 bp palindromic sequence 5'-CTGTATATATATACAG-3'. In the presence of single-stranded DNA, RecA interacts with LexA causing an autocatalytic cleavage which disrupts the DNA-binding part of LexA, leading to derepression of the SOS regulon and eventually DNA repair. This chain is LexA repressor, found in Cronobacter sakazakii (strain ATCC BAA-894) (Enterobacter sakazakii).